The following is a 315-amino-acid chain: Methionyl-tRNA formyltransferase (315 aa).

113 to 116 is a (6S)-5,6,7,8-tetrahydrofolate binding site; that stretch reads SLLP.

The protein belongs to the Fmt family.

The enzyme catalyses L-methionyl-tRNA(fMet) + (6R)-10-formyltetrahydrofolate = N-formyl-L-methionyl-tRNA(fMet) + (6S)-5,6,7,8-tetrahydrofolate + H(+). Functionally, attaches a formyl group to the free amino group of methionyl-tRNA(fMet). The formyl group appears to play a dual role in the initiator identity of N-formylmethionyl-tRNA by promoting its recognition by IF2 and preventing the misappropriation of this tRNA by the elongation apparatus. The protein is Methionyl-tRNA formyltransferase of Cronobacter sakazakii (strain ATCC BAA-894) (Enterobacter sakazakii).